The chain runs to 912 residues: Tubulin polyglutamylase TTLL7 (912 aa).

The 353-residue stretch at 38–390 (KGIITANVAG…RTSDKRKNLA (353 aa)) folds into the TTL domain. ATP contacts are provided by residues Lys160, 166 to 167 (MG), 188 to 191 (QEYI), and 201 to 203 (KFD). An L-glutamate-binding site is contributed by Arg227. 249-250 (TN) lines the ATP pocket. Residues Tyr251, Ser252, and Lys271 each coordinate L-glutamate. 3 residues coordinate Mg(2+): Asp336, Glu349, and Asn351. Lys367 serves as a coordination point for L-glutamate. Residues 388-450 (NLAKQKAEAQ…VSQEEHENRH (63 aa)) form a c-MTBD region region. 2 disordered regions span residues 547 to 570 (YGSSDSSYDSSSSSSNSELDENEK) and 658 to 688 (PTSASRSHSLNRASSYARHLPHGSDTGSTNT). Residues 549–563 (SSDSSYDSSSSSSNS) show a composition bias toward low complexity. The segment covering 659–671 (TSASRSHSLNRAS) has biased composition (polar residues).

Belongs to the tubulin--tyrosine ligase family. As to quaternary structure, interacts with both alpha- and beta-tubulin (via C-terminal tubulin tails). Requires Mg(2+) as cofactor. In terms of tissue distribution, highly expressed in brain, testis and trachea. Expressed in brain, heart, kidney, liver, lung, muscle and trachea. In the brain, highly expressed in hippocampus, thalamus, olfactory bulb and cerebellum cortex, corpus callosum and striatum.

The protein localises to the cell projection. The protein resides in the cilium. It localises to the cytoplasm. It is found in the cytoskeleton. Its subcellular location is the cilium basal body. The protein localises to the dendrite. The protein resides in the perikaryon. It catalyses the reaction L-glutamyl-[protein] + L-glutamate + ATP = gamma-L-glutamyl-L-glutamyl-[protein] + ADP + phosphate + H(+). The enzyme catalyses (L-glutamyl)(n)-gamma-L-glutamyl-L-glutamyl-[protein] + L-glutamate + ATP = (L-glutamyl)(n+1)-gamma-L-glutamyl-L-glutamyl-[protein] + ADP + phosphate + H(+). Its function is as follows. Polyglutamylase which modifies tubulin, generating polyglutamate side chains of variable lengths on the gamma-carboxyl group of specific glutamate residues within the C-terminal tail of tubulin. Mediates both ATP-dependent initiation and elongation steps of the polyglutamylation reaction. Preferentially modifies the beta-tubulin tail over an alpha-tail. Competes with monoglycylase TTLL3 for modification site on beta-tubulin substrate, thereby creating an anticorrelation between glycylation and glutamylation reactions. Required for neurite growth; responsible for the strong increase in tubulin polyglutamylation during postnatal neuronal maturation. This Mus musculus (Mouse) protein is Tubulin polyglutamylase TTLL7.